Here is a 413-residue protein sequence, read N- to C-terminus: ATP phosphoribosyltransferase 2, chloroplastic (413 aa).

A chloroplast-targeting transit peptide spans 1–57 (MPISIPLNATLQYSSPSSSSSSSSLVPSSPLFSPIPSTTVSLTGIRQRCLRMVTSCV).

This sequence belongs to the ATP phosphoribosyltransferase family. Long subfamily. It depends on Mg(2+) as a cofactor.

It localises to the plastid. It is found in the chloroplast. It catalyses the reaction 1-(5-phospho-beta-D-ribosyl)-ATP + diphosphate = 5-phospho-alpha-D-ribose 1-diphosphate + ATP. The protein operates within amino-acid biosynthesis; L-histidine biosynthesis; L-histidine from 5-phospho-alpha-D-ribose 1-diphosphate: step 1/9. Its activity is regulated as follows. Feedback inhibited by L-histidine. Functionally, catalyzes the condensation of ATP and 5-phosphoribose 1-diphosphate to form N'-(5'-phosphoribosyl)-ATP (PR-ATP). This Arabidopsis thaliana (Mouse-ear cress) protein is ATP phosphoribosyltransferase 2, chloroplastic (HISN1B).